Here is a 146-residue protein sequence, read N- to C-terminus: Large ribosomal subunit protein uL15 (146 aa).

A disordered region spans residues 1 to 39; the sequence is MTLKLHNLRPAPGAKTAKTRVGRGEGSKGKTAGRGTKGT.

This sequence belongs to the universal ribosomal protein uL15 family. Part of the 50S ribosomal subunit.

Binds to the 23S rRNA. This is Large ribosomal subunit protein uL15 from Nocardioides sp. (strain ATCC BAA-499 / JS614).